We begin with the raw amino-acid sequence, 170 residues long: Cytochrome c-type biogenesis protein CcmE (170 aa).

At 1–7 the chain is on the cytoplasmic side; that stretch reads MTRKKRR. A helical; Signal-anchor for type II membrane protein membrane pass occupies residues 8-28; the sequence is LILIAACGSVLALAVGLILYA. Over 29–170 the chain is Periplasmic; that stretch reads MSGSIVFFRS…DSTLGPRSER (142 aa). Heme is bound by residues H122 and Y126. The disordered stretch occupies residues 132 to 170; sequence ADALKAQGRWQEGGPNRGGPAPKPATAAADSTLGPRSER.

The protein belongs to the CcmE/CycJ family.

The protein resides in the cell inner membrane. Heme chaperone required for the biogenesis of c-type cytochromes. Transiently binds heme delivered by CcmC and transfers the heme to apo-cytochromes in a process facilitated by CcmF and CcmH. The protein is Cytochrome c-type biogenesis protein CcmE of Methylobacterium radiotolerans (strain ATCC 27329 / DSM 1819 / JCM 2831 / NBRC 15690 / NCIMB 10815 / 0-1).